The chain runs to 491 residues: Xaa-Pro aminopeptidase 1 (491 aa).

The interval 1–32 is disordered; that stretch reads MAEELTPENPAIPETPEETEEPIKQRKNGLYP. 5 residues coordinate Mn(2+): aspartate 308, aspartate 320, histidine 403, glutamate 434, and glutamate 458.

Belongs to the peptidase M24B family. As to quaternary structure, homodimer. The cofactor is Mn(2+).

It catalyses the reaction Release of any N-terminal amino acid, including proline, that is linked to proline, even from a dipeptide or tripeptide.. In Streptomyces coelicolor (strain ATCC BAA-471 / A3(2) / M145), this protein is Xaa-Pro aminopeptidase 1 (pepPI).